The primary structure comprises 493 residues: UDP-N-acetylmuramoylalanine--D-glutamate ligase (493 aa).

126-132 (GTNGKTT) contributes to the ATP binding site.

It belongs to the MurCDEF family.

Its subcellular location is the cytoplasm. The catalysed reaction is UDP-N-acetyl-alpha-D-muramoyl-L-alanine + D-glutamate + ATP = UDP-N-acetyl-alpha-D-muramoyl-L-alanyl-D-glutamate + ADP + phosphate + H(+). It functions in the pathway cell wall biogenesis; peptidoglycan biosynthesis. Functionally, cell wall formation. Catalyzes the addition of glutamate to the nucleotide precursor UDP-N-acetylmuramoyl-L-alanine (UMA). The protein is UDP-N-acetylmuramoylalanine--D-glutamate ligase of Mycolicibacterium smegmatis (strain ATCC 700084 / mc(2)155) (Mycobacterium smegmatis).